A 180-amino-acid chain; its full sequence is Inner membrane-spanning protein YciB (180 aa).

A run of 6 helical transmembrane segments spans residues 4–24 (LLSEIGPVIAFFAGFFYGGGI), 25–45 (QHATLYMLITSVICITLCYVI), 49–69 (VSKLSIISTTVLLVSGSITLI), 76–96 (IKIKPTILYVIFGIIFLMSGI), 118–138 (ITLSYRTAAFFFFMAVVNEVV), and 150–170 (FKVFGVIPITFIFILLQLPLL).

It belongs to the YciB family.

The protein localises to the cell inner membrane. Its function is as follows. Plays a role in cell envelope biogenesis, maintenance of cell envelope integrity and membrane homeostasis. This Rickettsia africae (strain ESF-5) protein is Inner membrane-spanning protein YciB.